A 147-amino-acid polypeptide reads, in one-letter code: Transcription antitermination protein NusB (147 aa).

The protein belongs to the NusB family.

Involved in transcription antitermination. Required for transcription of ribosomal RNA (rRNA) genes. Binds specifically to the boxA antiterminator sequence of the ribosomal RNA (rrn) operons. The chain is Transcription antitermination protein NusB from Teredinibacter turnerae (strain ATCC 39867 / T7901).